The sequence spans 101 residues: Small ribosomal subunit protein uS14 (101 aa).

The protein belongs to the universal ribosomal protein uS14 family. As to quaternary structure, part of the 30S ribosomal subunit. Contacts proteins S3 and S10.

Binds 16S rRNA, required for the assembly of 30S particles and may also be responsible for determining the conformation of the 16S rRNA at the A site. The polypeptide is Small ribosomal subunit protein uS14 (Francisella tularensis subsp. holarctica (strain FTNF002-00 / FTA)).